An 871-amino-acid polypeptide reads, in one-letter code: Nonsense-mediated mRNA decay factor SMG8 (871 aa).

Residues 541-596 (LDDMELPESLQQSYTSSEDSSEDDDDFAIQTASSEDSLSGSDSYARPGSRRDEFES) are disordered. Positions 573 to 583 (SSEDSLSGSDS) are enriched in low complexity.

The protein belongs to the SMG8 family.

Involved in nonsense-mediated decay (NMD) of mRNAs containing premature stop codons. Probable component of kinase complex containing smg-1 and recruited to stalled ribosomes. In Caenorhabditis briggsae, this protein is Nonsense-mediated mRNA decay factor SMG8 (smg-8).